Reading from the N-terminus, the 478-residue chain is Glutamyl-tRNA(Gln) amidotransferase subunit A (478 aa).

Catalysis depends on charge relay system residues Lys72 and Ser147. Ser171 acts as the Acyl-ester intermediate in catalysis.

Belongs to the amidase family. GatA subfamily. In terms of assembly, heterotrimer of A, B and C subunits.

The enzyme catalyses L-glutamyl-tRNA(Gln) + L-glutamine + ATP + H2O = L-glutaminyl-tRNA(Gln) + L-glutamate + ADP + phosphate + H(+). Its function is as follows. Allows the formation of correctly charged Gln-tRNA(Gln) through the transamidation of misacylated Glu-tRNA(Gln) in organisms which lack glutaminyl-tRNA synthetase. The reaction takes place in the presence of glutamine and ATP through an activated gamma-phospho-Glu-tRNA(Gln). This is Glutamyl-tRNA(Gln) amidotransferase subunit A from Saccharolobus solfataricus (strain ATCC 35092 / DSM 1617 / JCM 11322 / P2) (Sulfolobus solfataricus).